Here is a 383-residue protein sequence, read N- to C-terminus: NIPA-like protein 2 (383 aa).

2 N-linked (GlcNAc...) asparagine glycosylation sites follow: Asn-23 and Asn-33. Transmembrane regions (helical) follow at residues 46 to 66 (IHLF…ISLN), 88 to 108 (VLWL…FAAY), 115 to 135 (LIAP…VLFL), 144 to 164 (LLGM…APNI), 177 to 197 (FVGW…CILL), 208 to 228 (IVVL…SVKA), 243 to 263 (LTYA…VFQV), 278 to 298 (VVPV…IIFY), and 306 to 326 (FLTV…VFLV). The tract at residues 352-383 (DKVQPDSNGLSYGTLPDGGDSTRGQCGEKKES) is disordered.

The protein belongs to the NIPA family.

It localises to the membrane. This is NIPA-like protein 2 (Nipal2) from Mus musculus (Mouse).